A 135-amino-acid chain; its full sequence is Large ribosomal subunit protein bL21 (135 aa).

Over residues T109–T128 the composition is skewed to polar residues. The tract at residues T109–E135 is disordered.

The protein belongs to the bacterial ribosomal protein bL21 family. As to quaternary structure, part of the 50S ribosomal subunit. Contacts protein L20.

Its function is as follows. This protein binds to 23S rRNA in the presence of protein L20. This Synechococcus sp. (strain JA-3-3Ab) (Cyanobacteria bacterium Yellowstone A-Prime) protein is Large ribosomal subunit protein bL21.